Consider the following 483-residue polypeptide: Keratin, type II cytoskeletal 8 (483 aa).

Polar residues predominate over residues 1-16 (MSIRVTQKSYKVSTSG). The tract at residues 1–41 (MSIRVTQKSYKVSTSGPRAFSSRSYTSGPGSRISSSSFSRV) is disordered. The head stretch occupies residues 1–90 (MSIRVTQKSY…DPNIQAVRTQ (90 aa)). Position 9 is a phosphoserine; by PKC/PRKCE (S9). K11 is covalently cross-linked (Glycyl lysine isopeptide (Lys-Gly) (interchain with G-Cter in SUMO2)). Phosphoserine occurs at positions 13, 15, 21, and 22. R23 is subject to Omega-N-methylarginine. S24 bears the Phosphoserine; by PKC/PRKCE mark. The segment covering 24–41 (SYTSGPGSRISSSSFSRV) has biased composition (low complexity). T26 bears the Phosphothreonine mark. S27 and S31 each carry phosphoserine. Omega-N-methylarginine is present on R32. S34, S37, and S39 each carry phosphoserine. At R40 the chain carries Omega-N-methylarginine. Residues S43 and S44 each carry the phosphoserine modification. R47 carries the post-translational modification Asymmetric dimethylarginine; alternate. Omega-N-methylarginine; alternate is present on R47. The residue at position 74 (S74) is a Phosphoserine; by MAPK. The coil 1A stretch occupies residues 91 to 126 (EKEQIKTLNNKFASFIDKVRFLEQQNKMLETKWSLL). An IF rod domain is found at 91 to 402 (EKEQIKTLNN…KLLEGEESRL (312 aa)). At K101 the chain carries N6-malonyllysine. Glycyl lysine isopeptide (Lys-Gly) (interchain with G-Cter in SUMO2) cross-links involve residues K122 and K130. The segment at 127 to 143 (QQQKTARSNMDNMFESY) is linker 1. The segment at 144-235 (INNLRRQLET…QLYEEEIREL (92 aa)) is coil 1B. A Glycyl lysine isopeptide (Lys-Gly) (interchain with G-Cter in SUMO1); alternate cross-link involves residue K197. K197 is covalently cross-linked (Glycyl lysine isopeptide (Lys-Gly) (interchain with G-Cter in SUMO2); alternate). Position 207 is an N6-acetyllysine (K207). At Y228 the chain carries Phosphotyrosine. The linker 12 stretch occupies residues 236-259 (QSQISDTSVVLSMDNSRSLDMDSI). Phosphoserine occurs at positions 253 and 258. The interval 260–398 (IAEVKAQYED…ATYRKLLEGE (139 aa)) is coil 2. The segment at 261 to 382 (AEVKAQYEDI…EYQELMNVKL (122 aa)) is necessary for interaction with PNN. Residue K264 forms a Glycyl lysine isopeptide (Lys-Gly) (interchain with G-Cter in SUMO2) linkage. The residue at position 274 (S274) is a Phosphoserine. K285 is covalently cross-linked (Glycyl lysine isopeptide (Lys-Gly) (interchain with G-Cter in SUMO2)). S291 carries the post-translational modification Phosphoserine. K295 is covalently cross-linked (Glycyl lysine isopeptide (Lys-Gly) (interchain with G-Cter in SUMO2); alternate). K295 is subject to N6-acetyllysine; alternate. A Glycyl lysine isopeptide (Lys-Gly) (interchain with G-Cter in SUMO2) cross-link involves residue K304. A Glycyl lysine isopeptide (Lys-Gly) (interchain with G-Cter in SUMO2); alternate cross-link involves residue K325. An N6-acetyllysine; alternate modification is found at K325. The residue at position 330 (S330) is a Phosphoserine. A Glycyl lysine isopeptide (Lys-Gly) (interchain with G-Cter in SUMO2) cross-link involves residue K393. The tract at residues 399-483 (ESRLESGMQN…VSESSDVLPK (85 aa)) is tail. A phosphoserine mark is found at S400, S404, S410, S417, and S424. S432 carries the phosphoserine; by CaMK2 and MAPK modification. K472 participates in a covalent cross-link: Glycyl lysine isopeptide (Lys-Gly) (interchain with G-Cter in SUMO1); alternate. Residue K472 forms a Glycyl lysine isopeptide (Lys-Gly) (interchain with G-Cter in SUMO2); alternate linkage. 3 positions are modified to phosphoserine: S475, S477, and S478.

The protein belongs to the intermediate filament family. As to quaternary structure, heterotetramer of two type I and two type II keratins. Forms a heterodimer with KRT18. Associates with KRT20. Interacts with PLEC isoform 1C, when in a heterodimer with KRT18. Interacts with PNN. When associated with KRT19, interacts with DMD. Interacts with TCHP. Interacts with APEX1. Interacts with GPER1. Interacts with EPPK1. Interacts with PKP1 and PKP2. (Microbial infection) Interacts with hepatitis C virus/HCV core protein. Post-translationally, phosphorylation on serine residues is enhanced during EGF stimulation and mitosis. Ser-74 phosphorylation plays an important role in keratin filament reorganization. O-glycosylated. O-GlcNAcylation at multiple sites increases solubility, and decreases stability by inducing proteasomal degradation. In terms of processing, O-glycosylated (O-GlcNAcylated), in a cell cycle-dependent manner. Observed in muscle fibers accumulating in the costameres of myoplasm at the sarcolemma membrane in structures that contain dystrophin and spectrin. Expressed in gingival mucosa and hard palate of the oral cavity.

Its subcellular location is the cytoplasm. The protein localises to the nucleus. It localises to the nucleoplasm. The protein resides in the nucleus matrix. In terms of biological role, together with KRT19, helps to link the contractile apparatus to dystrophin at the costameres of striated muscle. In Homo sapiens (Human), this protein is Keratin, type II cytoskeletal 8 (KRT8).